A 416-amino-acid chain; its full sequence is Probable pectate lyase 8 (416 aa).

An N-terminal signal peptide occupies residues 1–24 (MAVTKLILFASALLLTALFIGVNA). 3 N-linked (GlcNAc...) asparagine glycosylation sites follow: Asn-23, Asn-28, and Asn-52. Ca(2+) contacts are provided by Asp-214, Asp-238, and Asp-242. The active site involves Arg-294.

Belongs to the polysaccharide lyase 1 family. It depends on Ca(2+) as a cofactor.

It carries out the reaction Eliminative cleavage of (1-&gt;4)-alpha-D-galacturonan to give oligosaccharides with 4-deoxy-alpha-D-galact-4-enuronosyl groups at their non-reducing ends.. The protein operates within glycan metabolism; pectin degradation; 2-dehydro-3-deoxy-D-gluconate from pectin: step 2/5. This Arabidopsis thaliana (Mouse-ear cress) protein is Probable pectate lyase 8.